Reading from the N-terminus, the 103-residue chain is Small ribosomal subunit protein uS10 (103 aa).

This sequence belongs to the universal ribosomal protein uS10 family. Part of the 30S ribosomal subunit.

Involved in the binding of tRNA to the ribosomes. This chain is Small ribosomal subunit protein uS10, found in Stutzerimonas stutzeri (strain A1501) (Pseudomonas stutzeri).